A 119-amino-acid polypeptide reads, in one-letter code: Ribonuclease P protein component (119 aa).

The protein belongs to the RnpA family. As to quaternary structure, consists of a catalytic RNA component (M1 or rnpB) and a protein subunit.

It catalyses the reaction Endonucleolytic cleavage of RNA, removing 5'-extranucleotides from tRNA precursor.. Functionally, RNaseP catalyzes the removal of the 5'-leader sequence from pre-tRNA to produce the mature 5'-terminus. It can also cleave other RNA substrates such as 4.5S RNA. The protein component plays an auxiliary but essential role in vivo by binding to the 5'-leader sequence and broadening the substrate specificity of the ribozyme. The chain is Ribonuclease P protein component from Erwinia tasmaniensis (strain DSM 17950 / CFBP 7177 / CIP 109463 / NCPPB 4357 / Et1/99).